The sequence spans 71 residues: Large ribosomal subunit protein bL31 (71 aa).

Zn(2+) contacts are provided by Cys-16, Cys-18, Cys-37, and Cys-40.

It belongs to the bacterial ribosomal protein bL31 family. Type A subfamily. As to quaternary structure, part of the 50S ribosomal subunit. Zn(2+) serves as cofactor.

Binds the 23S rRNA. The chain is Large ribosomal subunit protein bL31 from Pseudomonas entomophila (strain L48).